Reading from the N-terminus, the 232-residue chain is Large ribosomal subunit protein uL1 (232 aa).

Belongs to the universal ribosomal protein uL1 family. In terms of assembly, part of the 50S ribosomal subunit.

Binds directly to 23S rRNA. The L1 stalk is quite mobile in the ribosome, and is involved in E site tRNA release. Its function is as follows. Protein L1 is also a translational repressor protein, it controls the translation of the L11 operon by binding to its mRNA. This chain is Large ribosomal subunit protein uL1, found in Bordetella petrii (strain ATCC BAA-461 / DSM 12804 / CCUG 43448).